The primary structure comprises 351 residues: Anaerobic nitrite reductase Glb1-2 (351 aa).

Globin domains are found at residues 13–162 (DFTE…VEMK) and 184–333 (CFTE…AEMK). Positions 56, 70, 74, 104, 108, 109, 227, 241, 245, 275, 279, and 280 each coordinate heme b. The segment at 331–351 (EMKKTDHDHQTNVEDKSKPSS) is disordered.

Belongs to the plant globin family. In terms of assembly, monomer. The cofactor is heme b. In terms of tissue distribution, predominantly expressed in nodules and roots, and, to a lesser extent, in leaves, at low levels in pods, but barely in stems, petioles, buds and flowers. Mainly expressed in nodules and roots at low levels, and barely in leaves. As to expression, expressed at very low levels in nodules, roots and pods.

It is found in the cytoplasm. Its subcellular location is the nucleus. The catalysed reaction is Fe(III)-heme b-[protein] + nitric oxide + H2O = Fe(II)-heme b-[protein] + nitrite + 2 H(+). Functionally, phytoglobin that regulates the fine tuning of nitric oxide (NO) concentration in the cytosol in response to sudden changes in O(2) availability, and performs both symbiotic and nonsymbiotic functions. Exhibits NO dioxygenase activity in the presence of O(2) but nitrite reductase (NiR) activity in the absence of O(2) (e.g. during flooding or in waterlogged soil). May not function as an oxygen storage or transport protein. Extremely reactive toward the physiological ligands O(2), nitric oxide (NO), and nitrite with a very high affinity for O(2) through an hexacoordinate heme iron because of a very low dissociation constant. Its function is as follows. Very high affinity for O(2) through two hexacoordinate heme irons. Extremely reactive toward the physiological ligands O(2), nitric oxide (NO), and nitrite. Very high affinity for O(2) through a single hexacoordinate heme iron. Extremely reactive toward the physiological ligands O(2), nitric oxide (NO), and nitrite. This is Anaerobic nitrite reductase Glb1-2 from Medicago truncatula (Barrel medic).